We begin with the raw amino-acid sequence, 298 residues long: FH protein interacting protein FIP2 (298 aa).

One can recognise a BTB domain in the interval serine 9–serine 80. Pentapeptide repeat domains are found at residues glutamate 129–arginine 165, threonine 166–leucine 203, alanine 216–glycine 255, and alanine 256–glycine 295.

In terms of assembly, interacts with FH1. As to expression, expressed in all tissues but preferentially in roots and flowers.

The protein operates within protein modification; protein ubiquitination. Functionally, may act as a substrate-specific adapter of an E3 ubiquitin-protein ligase complex (CUL3-RBX1-BTB) which mediates the ubiquitination and subsequent proteasomal degradation of target proteins. The chain is FH protein interacting protein FIP2 (FIP2) from Arabidopsis thaliana (Mouse-ear cress).